The following is a 266-amino-acid chain: Vitamin B12-binding protein (266 aa).

Residues 1–22 (MAKSLFRALVALSFLAPLWLNA) form the signal peptide. Residues 25–266 (RVITLSPANT…QLCNALSQVD (242 aa)) form the Fe/B12 periplasmic-binding domain. Cyanocob(III)alamin-binding positions include Y50 and 242–246 (DWFER). The cysteines at positions 183 and 259 are disulfide-linked.

This sequence belongs to the BtuF family. As to quaternary structure, the complex is composed of two ATP-binding proteins (BtuD), two transmembrane proteins (BtuC) and a solute-binding protein (BtuF).

It localises to the periplasm. Its function is as follows. Part of the ABC transporter complex BtuCDF involved in vitamin B12 import. Binds vitamin B12 and delivers it to the periplasmic surface of BtuC. The sequence is that of Vitamin B12-binding protein from Shigella flexneri.